An 87-amino-acid chain; its full sequence is UPF0250 protein Ent638_1166 (87 aa).

This sequence belongs to the UPF0250 family.

The sequence is that of UPF0250 protein Ent638_1166 from Enterobacter sp. (strain 638).